The chain runs to 1176 residues: Leucine--tRNA ligase, cytoplasmic (1176 aa).

Positions 52 and 54 each coordinate L-leucine. Residues 60–63 (HLGH) carry the 'HIGH' region motif. The disordered stretch occupies residues 115-142 (PDFPDEEDEEEETNVKTEDTRIKDKAKG). Residues 117-126 (FPDEEDEEEE) are compositionally biased toward acidic residues. Basic and acidic residues predominate over residues 127 to 139 (TNVKTEDTRIKDK). The residue at position 167 (S167) is a Phosphoserine. An editing domain region spans residues 260–509 (GPQEYTLLKL…DAGDALIYME (250 aa)). L-leucine-binding residues include L594 and S597. A 'KMSKS' region motif is present at residues 716 to 720 (KMSKS). Position 719 (K719) interacts with ATP. The residue at position 720 (S720) is a Phosphoserine. Residues K970 and K1047 each carry the N6-acetyllysine modification.

Belongs to the class-I aminoacyl-tRNA synthetase family.

It localises to the cytoplasm. It catalyses the reaction tRNA(Leu) + L-leucine + ATP = L-leucyl-tRNA(Leu) + AMP + diphosphate. The catalysed reaction is L-methionyl-tRNA(Leu) + H2O = tRNA(Leu) + L-methionine + H(+). Its activity is regulated as follows. 5-fluoro-1,3-dihydro-1-hydroxy-1,2-benzoxaborole inhibits LARS1 by forming a covalent adduct with the 3' adenosine of tRNA(Leu) at the editing site, thus locking the enzyme in an inactive conformation. Functionally, aminoacyl-tRNA synthetase that catalyzes the specific attachment of leucine to its cognate tRNA (tRNA(Leu)). It performs tRNA aminoacylation in a two-step reaction: Leu is initially activated by ATP to form a leucyl-adenylate (Leu-AMP) intermediate; then the leucyl moiety is transferred to the acceptor 3' end of the tRNA to yield leucyl-tRNA. To improve the fidelity of catalytic reactions, it is also able to hydrolyze misactivated aminoacyl-adenylate intermediates (pre-transfer editing) and mischarged aminoacyl-tRNAs (post-transfer editing). The polypeptide is Leucine--tRNA ligase, cytoplasmic (LARS1) (Pongo abelii (Sumatran orangutan)).